The following is a 61-amino-acid chain: Bowman-Birk type proteinase inhibitor (61 aa).

Cystine bridges form between C4/C57, C5/C20, C8/C53, C10/C18, C27/C34, C31/C46, and C36/C44.

This sequence belongs to the Bowman-Birk serine protease inhibitor family.

Its function is as follows. Strong inhibitor of trypsin with a 1:1 stoichiometry. Weaker inhibitor of chymotrypsin. The chain is Bowman-Birk type proteinase inhibitor from Erythrina variegata (Indian coral tree).